The following is a 170-amino-acid chain: Small ribosomal subunit protein uS3mA (170 aa).

The transit peptide at 1 to 30 (MAAPVMSALGRLQGLIRTERSLLTHVQSRC) directs the protein to the mitochondrion.

It belongs to the universal ribosomal protein uS3 family. In terms of assembly, component of the mitochondrial ribosome small subunit (28S) which comprises a 12S rRNA and about 30 distinct proteins.

The protein resides in the mitochondrion. This chain is Small ribosomal subunit protein uS3mA (mrps24-a), found in Xenopus laevis (African clawed frog).